The following is a 2646-amino-acid chain: Probable inactive serine/threonine-protein kinase roco10 (2646 aa).

Disordered stretches follow at residues 28 to 122 (LNYS…LSGG), 138 to 168 (NIPI…KDKD), 205 to 248 (PLFI…VSPS), 281 to 457 (QQQR…VKQA), 477 to 516 (MSKL…HTSP), 605 to 656 (TSPN…PHQY), and 882 to 907 (QSSS…STPS). Positions 46–56 (PQQNLLENDTL) are enriched in polar residues. Composition is skewed to low complexity over residues 78–115 (IITT…TSPS), 147–161 (SPTS…NNNN), and 215–228 (SRNN…GGNK). Positions 235–248 (KISSTSAAGDVSPS) are enriched in polar residues. Composition is skewed to low complexity over residues 285 to 297 (NGNN…NNNN) and 325 to 334 (NNNNNNNNNN). Residues 335–345 (KQPQHPMNGNH) show a composition bias toward polar residues. The segment covering 346–394 (SPSNGTSGSLSMSGSGIDNGGNNNNNSNTHGSSSNQSSGVTSPIIQSTS) has biased composition (low complexity). Polar residues-rich tracts occupy residues 402–416 (GLNS…SSPT) and 428–443 (TSAS…PLMN). Composition is skewed to low complexity over residues 444–454 (STGVSSSSSGV), 491–516 (PSSP…HTSP), 605–627 (TSPN…NSSP), 634–651 (QQQQ…NTNT), and 883–907 (SSSS…STPS). In terms of domain architecture, Rho-GAP spans 585–807 (SSISPISTAA…MFIQQADILF (223 aa)). LRR repeat units lie at residues 968–987 (QKLD…IKQL), 989–1011 (DLQE…ARLT), 1012–1033 (SLRT…MADF), 1040–1061 (NLEN…YTWL), 1062–1083 (KLKT…IFQI), 1085–1108 (TLEV…CTST), 1109–1131 (KLRS…INLV), 1132–1154 (ELQV…QKLT), 1155–1176 (SLTE…LLLL), 1178–1199 (NLKK…IHRM), 1201–1222 (SLIE…IVAL), 1224–1247 (KLNS…YIQK), 1248–1270 (GKEG…YRTR), 1271–1298 (IIML…SFSS), and 1303–1327 (LPSL…ILDI). Positions 1262 to 1474 (TNVPCYRTRI…RDIKQMIAKN (213 aa)) constitute a Roc domain. 3 disordered regions span residues 1293 to 1317 (KSSF…SNNS), 1651 to 1670 (NNNN…SRSM), and 1957 to 2026 (NNSS…KEKE). The span at 1651-1669 (NNNNSNGNNVGRGRSGSRS) shows a compositional bias: low complexity. Over residues 1966 to 1975 (PIASSRSNPK) the composition is skewed to polar residues. Residues 1983-1996 (NLIQSNNNDNNNSL) show a composition bias toward low complexity. Residues 1997–2026 (SKKDLKELAKQNKEKEKEKEKDKDKEKEKE) show a composition bias toward basic and acidic residues. Residues 2049–2342 (FSICHFIKEI…PSKIISQLYT (294 aa)) enclose the Protein kinase domain. Residues 2055-2063 (IKEIDYREI) and Lys-2094 each bind ATP. Positions 2412–2536 (MVVLNNKQST…FTVPTTNKNG (125 aa)) constitute an RGS domain.

The protein belongs to the protein kinase superfamily. TKL Ser/Thr protein kinase family. ROCO subfamily.

In Dictyostelium discoideum (Social amoeba), this protein is Probable inactive serine/threonine-protein kinase roco10 (roco10).